The primary structure comprises 432 residues: Adenylosuccinate synthetase (432 aa).

GTP-binding positions include 13–19 (GDEGKGK) and 41–43 (GHT). The Proton acceptor role is filled by D14. 2 residues coordinate Mg(2+): D14 and G41. IMP-binding positions include 14–17 (DEGK), 39–42 (NAGH), T130, R144, Q225, T240, and R304. The Proton donor role is filled by H42. Substrate is bound at residue 300-306 (AVTGRPR). Residues R306, 332–334 (KLD), and 415–417 (STG) contribute to the GTP site.

The protein belongs to the adenylosuccinate synthetase family. In terms of assembly, homodimer. It depends on Mg(2+) as a cofactor.

It localises to the cytoplasm. It catalyses the reaction IMP + L-aspartate + GTP = N(6)-(1,2-dicarboxyethyl)-AMP + GDP + phosphate + 2 H(+). It participates in purine metabolism; AMP biosynthesis via de novo pathway; AMP from IMP: step 1/2. Functionally, plays an important role in the de novo pathway of purine nucleotide biosynthesis. Catalyzes the first committed step in the biosynthesis of AMP from IMP. This is Adenylosuccinate synthetase from Histophilus somni (strain 2336) (Haemophilus somnus).